The sequence spans 87 residues: Large ribosomal subunit protein uL23c (87 aa).

Belongs to the universal ribosomal protein uL23 family. As to quaternary structure, part of the 50S ribosomal subunit.

The protein resides in the plastid. It localises to the chloroplast. Binds to 23S rRNA. The protein is Large ribosomal subunit protein uL23c (rpl23) of Bigelowiella natans (Pedinomonas minutissima).